The following is a 535-amino-acid chain: Peptide chain release factor 3 (535 aa).

The tr-type G domain occupies 8 to 277; it reads KRRRTFAIIS…TLVDLAPPPG (270 aa). GTP is bound by residues 17–24, 85–89, and 139–142; these read SHPDAGKT, DTPGH, and NKLD.

It belongs to the TRAFAC class translation factor GTPase superfamily. Classic translation factor GTPase family. PrfC subfamily.

It is found in the cytoplasm. Functionally, increases the formation of ribosomal termination complexes and stimulates activities of RF-1 and RF-2. It binds guanine nucleotides and has strong preference for UGA stop codons. It may interact directly with the ribosome. The stimulation of RF-1 and RF-2 is significantly reduced by GTP and GDP, but not by GMP. The polypeptide is Peptide chain release factor 3 (Nitrosomonas eutropha (strain DSM 101675 / C91 / Nm57)).